The following is a 185-amino-acid chain: Ribosome-recycling factor (185 aa).

The disordered stretch occupies residues 137 to 159 (EDLKADEKAKDISEDDRKRMEDE).

It belongs to the RRF family.

The protein resides in the cytoplasm. In terms of biological role, responsible for the release of ribosomes from messenger RNA at the termination of protein biosynthesis. May increase the efficiency of translation by recycling ribosomes from one round of translation to another. This Erythrobacter litoralis (strain HTCC2594) protein is Ribosome-recycling factor.